The primary structure comprises 880 residues: Dynamin-like protein A (880 aa).

The interval 1–124 is disordered; it reads MSVFKKKDKS…QVELERKRRD (124 aa). Residues 8 to 20 are compositionally biased toward basic and acidic residues; it reads DKSDDKKKKHDEE. Polar residues predominate over residues 22 to 31; the sequence is PQGTFQPASQ. Low complexity predominate over residues 32–68; that stretch reads STSNTNLNSLASSVNNGASVGSTNGSTPNNSNGSTPT. Residues 69–152 are a coiled coil; it reads YNHNNSAEEL…NEQVEISSLE (84 aa). Basic and acidic residues-rich tracts occupy residues 77-94 and 103-124; these read ELEKQKKEEDEKRKKSEL and KKKEDEEKQRKEQVELERKRRD. Residues 191-478 form the Dynamin-type G domain; sequence AVSHPEIVFV…VWKSYQDTIP (288 aa). The tract at residues 201-208 is G1 motif; the sequence is GPRSSGKS. 201–208 is a GTP binding site; that stretch reads GPRSSGKS. The interval 227–240 is G2 motif; sequence IVGVGGSNANGCSK. The segment at 315-318 is G3 motif; that stretch reads DSPG. GTP is bound by residues 315–319 and 380–383; these read DSPGL and TKFH. The tract at residues 380–383 is G4 motif; sequence TKFH. Residues 413–416 form a G5 motif region; it reads LPNH. A coiled-coil region spans residues 479–509; that stretch reads RILKHLRSKRQTAEATLNELQKQSSSLDSTK. A compositionally biased stretch (polar residues) spans 532–543; it reads TSEGNPSANGQT. Residues 532–551 are disordered; it reads TSEGNPSANGQTLDEEKSQQ. Residues 824 to 861 adopt a coiled-coil conformation; the sequence is SNEQLEQLFEVQATREQLKQEEKKQQQILEKYSQIDEQ.

This sequence belongs to the TRAFAC class dynamin-like GTPase superfamily. Dynamin/Fzo/YdjA family.

It localises to the cytoplasm. Its subcellular location is the cleavage furrow. The catalysed reaction is GTP + H2O = GDP + phosphate + H(+). In terms of biological role, involved in cytokinesis. May hydrolyze GTP. This is Dynamin-like protein A (dlpA) from Dictyostelium discoideum (Social amoeba).